The chain runs to 417 residues: Serine hydroxymethyltransferase (417 aa).

Residues Leu121 and 125–127 contribute to the (6S)-5,6,7,8-tetrahydrofolate site; that span reads GHL. Lys229 bears the N6-(pyridoxal phosphate)lysine mark. 355 to 357 is a (6S)-5,6,7,8-tetrahydrofolate binding site; that stretch reads SPF.

Belongs to the SHMT family. Homodimer. Pyridoxal 5'-phosphate serves as cofactor.

Its subcellular location is the cytoplasm. It catalyses the reaction (6R)-5,10-methylene-5,6,7,8-tetrahydrofolate + glycine + H2O = (6S)-5,6,7,8-tetrahydrofolate + L-serine. The protein operates within one-carbon metabolism; tetrahydrofolate interconversion. It functions in the pathway amino-acid biosynthesis; glycine biosynthesis; glycine from L-serine: step 1/1. Its function is as follows. Catalyzes the reversible interconversion of serine and glycine with tetrahydrofolate (THF) serving as the one-carbon carrier. This reaction serves as the major source of one-carbon groups required for the biosynthesis of purines, thymidylate, methionine, and other important biomolecules. Also exhibits THF-independent aldolase activity toward beta-hydroxyamino acids, producing glycine and aldehydes, via a retro-aldol mechanism. This is Serine hydroxymethyltransferase from Aeromonas hydrophila subsp. hydrophila (strain ATCC 7966 / DSM 30187 / BCRC 13018 / CCUG 14551 / JCM 1027 / KCTC 2358 / NCIMB 9240 / NCTC 8049).